The sequence spans 494 residues: Cysteine protease ATG4 (494 aa).

Positions 102–105 (FVPI) match the APEAR motif. The active-site Nucleophile is Cys147. The residue at position 307 (Ser307) is a Phosphoserine. Residues Asp322 and His324 contribute to the active site. The cysteines at positions 338 and 394 are disulfide-linked. The LIR motif lies at 424–427 (YVDI). Ser488 bears the Phosphoserine mark.

The protein belongs to the peptidase C54 family. In terms of assembly, interacts with ATG8. Interacts with TUB1 and TUB2. Post-translationally, phosphorylation at Ser-307 by ATG1 inhibits autophagy: it takes place on autophagosome membranes and decreases its interaction with ATG8, thereby impairing deconjugation of PE-conjugated forms of ATG8. In terms of processing, formation of a disulfide bond between Cys-338 and Cys-394 leads to reduced autophagy. The disulfide bond is reduced by thioredoxin.

The protein localises to the cytoplasm. Its subcellular location is the nucleus. It is found in the preautophagosomal structure. It catalyses the reaction [protein]-C-terminal L-amino acid-glycyl-phosphatidylethanolamide + H2O = [protein]-C-terminal L-amino acid-glycine + a 1,2-diacyl-sn-glycero-3-phosphoethanolamine. Functionally, cysteine protease that plays a key role in cytoplasm to vacuole transport (Cvt) and autophagy by mediating both proteolytic activation and delipidation of ATG8. Required for selective autophagic degradation of the nucleus (nucleophagy) as well as for mitophagy which contributes to regulate mitochondrial quantity and quality by eliminating the mitochondria to a basal level to fulfill cellular energy requirements and preventing excess ROS production. The protease activity is required for proteolytic activation of ATG8: cleaves the C-terminal amino acid of ATG8 to reveal a C-terminal glycine. ATG8 ubiquitin-like activity requires the exposure of the glycine at the C-terminus for its conjugation to phosphatidylethanolamine (PE) and its insertion to membranes, which is necessary for autophagy. The ATG8-PE conjugate mediates tethering between adjacent membranes and stimulates membrane hemifusion, leading to expansion of the autophagosomal membrane during autophagy. In addition to the protease activity, also catalyzes deconjugation of PE-conjugated forms of ATG8 during macroautophagy: ATG8 delipidation is required to release the protein from membranes, which facilitates multiple events during macroautophagy, and especially for efficient autophagosome biogenesis, the assembly of ATG9-containing tubulovesicular clusters into phagophores/autophagosomes, and for the disassembly of PAS-associated ATG components. ATG8 delipidation by ATG4 also recycles ATG8-PE generated on inappropriate membranes to maintain a reservoir of unlipidated ATG8 that is required for autophagosome formation at the PAS. This is Cysteine protease ATG4 (ATG4) from Saccharomyces cerevisiae (strain YJM789) (Baker's yeast).